The chain runs to 352 residues: Ion-translocating oxidoreductase complex subunit D (352 aa).

The next 4 helical transmembrane spans lie at 20 to 40, 42 to 62, 89 to 109, and 123 to 143; these read IMLL…WFFG, GTLV…ALVL, IPPL…VIIA, and PAMI…TSWL. T187 carries the FMN phosphoryl threonine modification. The next 5 helical transmembrane spans lie at 214 to 234, 242 to 262, 267 to 287, 301 to 321, and 322 to 342; these read ILAG…GVWL, WHVP…GWLF, LAAP…FFIL, LIFG…GGYP, and DGVA…DYYT.

It belongs to the NqrB/RnfD family. In terms of assembly, the complex is composed of six subunits: RsxA, RsxB, RsxC, RsxD, RsxE and RsxG. FMN is required as a cofactor.

The protein resides in the cell inner membrane. Part of a membrane-bound complex that couples electron transfer with translocation of ions across the membrane. Required to maintain the reduced state of SoxR. The chain is Ion-translocating oxidoreductase complex subunit D from Escherichia coli (strain UTI89 / UPEC).